Reading from the N-terminus, the 377-residue chain is Nitric oxide reductase FlRd-NAD(+) reductase (377 aa).

It belongs to the FAD-dependent oxidoreductase family. It depends on FAD as a cofactor.

The protein resides in the cytoplasm. It carries out the reaction 2 reduced [nitric oxide reductase rubredoxin domain] + NAD(+) + H(+) = 2 oxidized [nitric oxide reductase rubredoxin domain] + NADH. The protein operates within nitrogen metabolism; nitric oxide reduction. One of at least two accessory proteins for anaerobic nitric oxide (NO) reductase. Reduces the rubredoxin moiety of NO reductase. This is Nitric oxide reductase FlRd-NAD(+) reductase from Escherichia coli O9:H4 (strain HS).